Here is an 83-residue protein sequence, read N- to C-terminus: Pigment-dispersing hormone peptides (83 aa).

Positions 1–24 (MRFIILGVLFIAVASMILSNGVMA) are cleaved as a signal peptide. The residue at position 80 (A80) is an Alanine amide.

The protein belongs to the arthropod PDH family. In terms of tissue distribution, strongly expressed in eyestalk tissue and cerebral ganglia (at protein level).

The protein localises to the secreted. Its function is as follows. The pigment-dispersing hormone causes the migration of the distal retinal pigment into the proximal end of the pigment chromatophore cells and thus decreases the amount of light entering the retinulas. May also function as a neurotransmitter and/or neuromodulator. The chain is Pigment-dispersing hormone peptides from Eurydice pulchra (Speckled sea louse).